The chain runs to 355 residues: Elongation factor Ts (355 aa).

The segment at 82–85 (TDFV) is involved in Mg(2+) ion dislocation from EF-Tu.

It belongs to the EF-Ts family.

It is found in the cytoplasm. In terms of biological role, associates with the EF-Tu.GDP complex and induces the exchange of GDP to GTP. It remains bound to the aminoacyl-tRNA.EF-Tu.GTP complex up to the GTP hydrolysis stage on the ribosome. This is Elongation factor Ts (tsf) from Helicobacter pylori (strain J99 / ATCC 700824) (Campylobacter pylori J99).